Here is a 29-residue protein sequence, read N- to C-terminus: Cysteine-rich venom protein 25-A (29 aa).

The protein belongs to the CRISP family. In terms of processing, contains 8 disulfide bonds. In terms of tissue distribution, expressed by the venom gland.

It localises to the secreted. In Naja haje haje (Egyptian cobra), this protein is Cysteine-rich venom protein 25-A.